An 81-amino-acid chain; its full sequence is Cell division protein ZapB (81 aa).

Residues 5–81 adopt a coiled-coil conformation; sequence LEVFEKLEAK…QALLGRMEEV (77 aa). Lys10 carries the N6-acetyllysine modification. Residues 36–67 form a disordered region; sequence NNSLSQEVQNAQHQREELERENNHLKEQQNGW. The span at 37–47 shows a compositional bias: polar residues; the sequence is NSLSQEVQNAQ. Over residues 48-62 the composition is skewed to basic and acidic residues; sequence HQREELERENNHLKE.

This sequence belongs to the ZapB family. In terms of assembly, homodimer. The ends of the coiled-coil dimer bind to each other, forming polymers. Interacts with FtsZ.

The protein localises to the cytoplasm. In terms of biological role, non-essential, abundant cell division factor that is required for proper Z-ring formation. It is recruited early to the divisome by direct interaction with FtsZ, stimulating Z-ring assembly and thereby promoting cell division earlier in the cell cycle. Its recruitment to the Z-ring requires functional FtsA or ZipA. The chain is Cell division protein ZapB from Shigella boydii serotype 4 (strain Sb227).